Reading from the N-terminus, the 286-residue chain is Interferon-induced 35 kDa protein (286 aa).

Positions 5–26 (LDAALHALQEEQARLKMRLWDL) are leucine-zipper. NID domains follow at residues 81-170 (ALIT…GDVD) and 183-266 (FARD…GEVE).

The protein belongs to the NMI family. As to quaternary structure, homodimer. Also interacts with BATF. Interacts with TRIM21. Interacts with NMI; the interaction is direct and is facilitated by TRIM21. Post-translationally, phosphorylated. Dephosphorylation correlates with the formation of a complex with NMI. Expressed in a wide range of cell types, including fibroblasts, macrophages, and epithelial cells.

Its subcellular location is the cytoplasm. The protein resides in the nucleus. The protein localises to the secreted. Functionally, acts as a signaling pathway regulator involved in innate immune system response. In response to interferon IFN-alpha, associates in a complex with signaling pathway regulator NMI to regulate immune response; the complex formation prevents proteasome-mediated degradation of IFI35 and correlates with IFI35 dephosphorylation. In complex with NMI, inhibits virus-triggered type I interferon/IFN-beta production. In complex with NMI, negatively regulates nuclear factor NF-kappa-B signaling by inhibiting the nuclear translocation, activation and transcription of the NF-kappa-B subunit p65/RELA, resulting in the inhibition of endothelial cell proliferation, migration and re-endothelialization of injured arteries. Beside its role as an intracellular signaling pathway regulator, also functions extracellularly as damage-associated molecular patterns (DAMPs) to promote inflammation when actively released by macrophage to the extracellular space during cell injury and pathogen invasion. Macrophage-secreted IFI35 activates NF-kappa-B signaling in adjacent macrophages through Toll-like receptor 4/TLR4 activation, thereby inducing NF-kappa-B translocation from the cytoplasm into the nucleus which promotes the release of pro-inflammatory cytokines. In Homo sapiens (Human), this protein is Interferon-induced 35 kDa protein.